The following is a 1032-amino-acid chain: Leucine-rich repeat and coiled-coil domain-containing protein 1 (1032 aa).

LRR repeat units lie at residues Thr44–Trp65, Asn66–Thr87, Lys88–Ile109, Asn110–His131, and Lys136–Met157. In terms of domain architecture, LRRCT spans Asn175–Gln218. A disordered region spans residues Asp316–Arg345. The segment covering Val318–Asp330 has biased composition (basic and acidic residues). A coiled-coil region spans residues Asn421–Leu647.

It belongs to the LRRCC1 family.

Its subcellular location is the cytoplasm. The protein localises to the cytoskeleton. The protein resides in the microtubule organizing center. It is found in the centrosome. It localises to the centriole. Functionally, required for the organization of the mitotic spindle. Maintains the structural integrity of centrosomes during mitosis. The chain is Leucine-rich repeat and coiled-coil domain-containing protein 1 (LRRCC1) from Homo sapiens (Human).